The sequence spans 114 residues: UPF0102 protein HPAG1_0809 (114 aa).

The protein belongs to the UPF0102 family.

The sequence is that of UPF0102 protein HPAG1_0809 from Helicobacter pylori (strain HPAG1).